Reading from the N-terminus, the 207-residue chain is Thiamine-phosphate synthase (207 aa).

4-amino-2-methyl-5-(diphosphooxymethyl)pyrimidine-binding positions include 35-39 (QYRDK) and Asn-67. Residues Asp-68 and Asp-86 each contribute to the Mg(2+) site. Thr-105 serves as a coordination point for 4-amino-2-methyl-5-(diphosphooxymethyl)pyrimidine. Residue 132-134 (SVT) participates in 2-[(2R,5Z)-2-carboxy-4-methylthiazol-5(2H)-ylidene]ethyl phosphate binding. Lys-135 lines the 4-amino-2-methyl-5-(diphosphooxymethyl)pyrimidine pocket. Gly-162 contacts 2-[(2R,5Z)-2-carboxy-4-methylthiazol-5(2H)-ylidene]ethyl phosphate.

Belongs to the thiamine-phosphate synthase family. The cofactor is Mg(2+).

The catalysed reaction is 2-[(2R,5Z)-2-carboxy-4-methylthiazol-5(2H)-ylidene]ethyl phosphate + 4-amino-2-methyl-5-(diphosphooxymethyl)pyrimidine + 2 H(+) = thiamine phosphate + CO2 + diphosphate. It carries out the reaction 2-(2-carboxy-4-methylthiazol-5-yl)ethyl phosphate + 4-amino-2-methyl-5-(diphosphooxymethyl)pyrimidine + 2 H(+) = thiamine phosphate + CO2 + diphosphate. The enzyme catalyses 4-methyl-5-(2-phosphooxyethyl)-thiazole + 4-amino-2-methyl-5-(diphosphooxymethyl)pyrimidine + H(+) = thiamine phosphate + diphosphate. It participates in cofactor biosynthesis; thiamine diphosphate biosynthesis; thiamine phosphate from 4-amino-2-methyl-5-diphosphomethylpyrimidine and 4-methyl-5-(2-phosphoethyl)-thiazole: step 1/1. In terms of biological role, condenses 4-methyl-5-(beta-hydroxyethyl)thiazole monophosphate (THZ-P) and 2-methyl-4-amino-5-hydroxymethyl pyrimidine pyrophosphate (HMP-PP) to form thiamine monophosphate (TMP). The sequence is that of Thiamine-phosphate synthase from Pseudomonas putida (strain ATCC 47054 / DSM 6125 / CFBP 8728 / NCIMB 11950 / KT2440).